A 785-amino-acid chain; its full sequence is Endonuclease MutS2 (785 aa).

An ATP-binding site is contributed by 334–341 (GPNTGGKT). A Smr domain is found at 710–785 (LDLRGYNVED…GVGATIAELK (76 aa)).

It belongs to the DNA mismatch repair MutS family. MutS2 subfamily. Homodimer. Binds to stalled ribosomes, contacting rRNA.

Its function is as follows. Endonuclease that is involved in the suppression of homologous recombination and thus may have a key role in the control of bacterial genetic diversity. In terms of biological role, acts as a ribosome collision sensor, splitting the ribosome into its 2 subunits. Detects stalled/collided 70S ribosomes which it binds and splits by an ATP-hydrolysis driven conformational change. Acts upstream of the ribosome quality control system (RQC), a ribosome-associated complex that mediates the extraction of incompletely synthesized nascent chains from stalled ribosomes and their subsequent degradation. Probably generates substrates for RQC. This Brevibacillus brevis (strain 47 / JCM 6285 / NBRC 100599) protein is Endonuclease MutS2.